The sequence spans 473 residues: Ribonuclease Y (473 aa).

A helical membrane pass occupies residues 4–24 (LIAFIILLILFVLLITIVPVV). Positions 158-218 (SLFNIDIIDE…IRREIARIVM (61 aa)) constitute a KH domain. Positions 285-378 (ILSHSLEVAE…VKIVDTLSAA (94 aa)) constitute an HD domain.

It belongs to the RNase Y family.

The protein localises to the cell membrane. Its function is as follows. Endoribonuclease that initiates mRNA decay. The protein is Ribonuclease Y of Ureaplasma parvum serovar 3 (strain ATCC 27815 / 27 / NCTC 11736).